Here is a 778-residue protein sequence, read N- to C-terminus: Gelsolin (778 aa).

Positions 1–23 (MGKQGFGYIFLTIFCTMALKLNC) are cleaved as a signal peptide. Positions 49–172 (MVEHAEFSKA…YKAGGVASGF (124 aa)) are actin-severing. A Gelsolin-like 1 repeat occupies 72–154 (FDLVPVPKNL…VQGHESSTFL (83 aa)). Ca(2+) contacts are provided by G88, D89, E120, D132, G137, and A139. The segment at 119 to 122 (DERG) is actin-actin interfilament contact point. 158-165 (KSGIKYKA) is a binding site for a 1,2-diacyl-sn-glycero-3-phospho-(1D-myo-inositol-4,5-bisphosphate). V168 serves as a coordination point for Ca(2+). 184–192 (RLLQVKGRR) is a binding site for a 1,2-diacyl-sn-glycero-3-phospho-(1D-myo-inositol-4,5-bisphosphate). A Gelsolin-like 2 repeat occupies 193-266 (TVRATEVPVS…SEEGAEREEM (74 aa)). Residues G209 and D210 each contribute to the Ca(2+) site. A disulfide bond links C211 and C224. The Ca(2+) site is built by E232, D282, E325, D326, E350, G467, D468, E498, D510, G515, P517, T547, N587, D588, E610, D692, D693, and E715. Gelsolin-like repeat units lie at residues 313-385 (DENP…TPLF) and 451-532 (SEKV…PHLM). Residues 430–778 (AAQHGMEDDG…LQRAMADVDV (349 aa)) are actin-binding, Ca-sensitive. 2 Gelsolin-like repeats span residues 574 to 638 (AVEL…DNFW) and 677 to 752 (IEEV…PPTF).

It belongs to the villin/gelsolin family. Binds to actin and to fibronectin. In terms of tissue distribution, highly expressed in homogene cells of the basilar papilla. Also detected in subcutaneous layer of the skin.

The protein resides in the secreted. It is found in the cytoplasm. It localises to the cytoskeleton. Its function is as follows. Calcium-regulated, actin-modulating protein that binds to the plus (or barbed) ends of actin monomers or filaments, preventing monomer exchange (end-blocking or capping). It can promote the assembly of monomers into filaments (nucleation) as well as sever filaments already formed. Plays a role in ciliogenesis. This Gallus gallus (Chicken) protein is Gelsolin (GSN).